The chain runs to 279 residues: Dermonecrotic toxin LspiSicTox-betaIE3i (279 aa).

Residue His5 is part of the active site. Mg(2+)-binding residues include Glu25 and Asp27. The active-site Nucleophile is the His41. 2 disulfide bridges follow: Cys45/Cys51 and Cys47/Cys190. Mg(2+) is bound at residue Asp85.

Belongs to the arthropod phospholipase D family. Class II subfamily. It depends on Mg(2+) as a cofactor. Expressed by the venom gland.

The protein localises to the secreted. It carries out the reaction an N-(acyl)-sphingosylphosphocholine = an N-(acyl)-sphingosyl-1,3-cyclic phosphate + choline. It catalyses the reaction an N-(acyl)-sphingosylphosphoethanolamine = an N-(acyl)-sphingosyl-1,3-cyclic phosphate + ethanolamine. The catalysed reaction is a 1-acyl-sn-glycero-3-phosphocholine = a 1-acyl-sn-glycero-2,3-cyclic phosphate + choline. The enzyme catalyses a 1-acyl-sn-glycero-3-phosphoethanolamine = a 1-acyl-sn-glycero-2,3-cyclic phosphate + ethanolamine. Dermonecrotic toxins cleave the phosphodiester linkage between the phosphate and headgroup of certain phospholipids (sphingolipid and lysolipid substrates), forming an alcohol (often choline) and a cyclic phosphate. This toxin acts on sphingomyelin (SM). It may also act on ceramide phosphoethanolamine (CPE), lysophosphatidylcholine (LPC) and lysophosphatidylethanolamine (LPE), but not on lysophosphatidylserine (LPS), and lysophosphatidylglycerol (LPG). It acts by transphosphatidylation, releasing exclusively cyclic phosphate products as second products. Induces dermonecrosis, hemolysis, increased vascular permeability, edema, inflammatory response, and platelet aggregation. The sequence is that of Dermonecrotic toxin LspiSicTox-betaIE3i from Loxosceles spinulosa (Recluse spider).